The chain runs to 202 residues: GTP cyclohydrolase 1 (202 aa).

3 residues coordinate Zn(2+): Cys-90, His-93, and Cys-163.

It belongs to the GTP cyclohydrolase I family. Toroid-shaped homodecamer, composed of two pentamers of five dimers.

It carries out the reaction GTP + H2O = 7,8-dihydroneopterin 3'-triphosphate + formate + H(+). It functions in the pathway cofactor biosynthesis; 7,8-dihydroneopterin triphosphate biosynthesis; 7,8-dihydroneopterin triphosphate from GTP: step 1/1. The protein is GTP cyclohydrolase 1 of Mycolicibacterium vanbaalenii (strain DSM 7251 / JCM 13017 / BCRC 16820 / KCTC 9966 / NRRL B-24157 / PYR-1) (Mycobacterium vanbaalenii).